The chain runs to 252 residues: GTP cyclohydrolase 1 type 2 homolog (252 aa).

Residues His-63, His-64, Asp-101, His-220, and Glu-224 each contribute to the a divalent metal cation site.

This sequence belongs to the GTP cyclohydrolase I type 2/NIF3 family. Homohexamer.

This chain is GTP cyclohydrolase 1 type 2 homolog, found in Vibrio cholerae serotype O1 (strain ATCC 39315 / El Tor Inaba N16961).